A 266-amino-acid polypeptide reads, in one-letter code: Small ribosomal subunit protein uS3m (266 aa).

It belongs to the universal ribosomal protein uS3 family.

It is found in the mitochondrion. The sequence is that of Small ribosomal subunit protein uS3m (MRPS3) from Mycosarcoma maydis (Corn smut fungus).